The sequence spans 610 residues: Zinc metalloproteinase-disintegrin-like bothropasin (610 aa).

The N-terminal stretch at 1–20 (MIEVLLVTICLAAFPYQGSS) is a signal peptide. Positions 21 to 191 (IILESGNVND…ASQLVVTAEQ (171 aa)) are excised as a propeptide. A Pyrrolidone carboxylic acid modification is found at Gln192. Positions 198 to 394 (RYVELFIVVD…ENPQCILNEP (197 aa)) constitute a Peptidase M12B domain. Glu201 and Asp285 together coordinate Ca(2+). 3 cysteine pairs are disulfide-bonded: Cys309–Cys389, Cys349–Cys373, and Cys351–Cys356. His334 provides a ligand contact to Zn(2+). Glu335 is an active-site residue. Residues His338 and His344 each coordinate Zn(2+). A glycan (N-linked (GlcNAc...) asparagine) is linked at Asn372. Ca(2+)-binding residues include Cys389, Asn392, Val404, Asn407, Leu409, Glu411, Glu414, and Asp417. Positions 402–488 (PPVCGNELLE…ECPADVFHKN (87 aa)) constitute a Disintegrin domain. Intrachain disulfides connect Cys405–Cys424, Cys405–Cys434, Cys416–Cys429, Cys416–Cys434, Cys418–Cys424, Cys428–Cys451, Cys442–Cys448, Cys447–Cys473, Cys460–Cys480, Cys467–Cys492, Cys467–Cys499, Cys492–Cys504, Cys499–Cys504, Cys511–Cys526, Cys511–Cys561, Cys526–Cys572, Cys539–Cys549, Cys549–Cys556, Cys556–Cys598, Cys561–Cys572, Cys592–Cys603, and Cys598–Cys603. The short motif at 466 to 468 (ECD) is the D/ECD-tripeptide element. Ca(2+) contacts are provided by Asp468, Pro469, Glu471, Asp483, and Val484.

Belongs to the venom metalloproteinase (M12B) family. P-III subfamily. P-IIIb sub-subfamily. In terms of assembly, monomer. The cofactor is Zn(2+). Expressed by the venom gland.

It is found in the secreted. The catalysed reaction is Cleavage of 5-His-|-Leu-6, 10-His-|-Leu-11, 14-Ala-|-Leu-15, 16-Tyr-|-Leu-17 and 24-Phe-|-Phe-25 in insulin B chain.. With respect to regulation, inhibited by EDTA and EGTA. In terms of biological role, has caseinolytic activity. Causes hemorrhage on rabbit skin and causes myonecrosis in mouse tibialis anterior muscle. Its function is as follows. Inhibits platelet aggregation. In Bothrops jararaca (Jararaca), this protein is Zinc metalloproteinase-disintegrin-like bothropasin.